The following is a 163-amino-acid chain: Small ribosomal subunit protein uS7 (163 aa).

Belongs to the universal ribosomal protein uS7 family. In terms of assembly, part of the 30S ribosomal subunit. Contacts proteins S9 and S11.

One of the primary rRNA binding proteins, it binds directly to 16S rRNA where it nucleates assembly of the head domain of the 30S subunit. Is located at the subunit interface close to the decoding center, probably blocks exit of the E-site tRNA. The sequence is that of Small ribosomal subunit protein uS7 from Rickettsia bellii (strain RML369-C).